Reading from the N-terminus, the 287-residue chain is Xyloglucan endotransglucosylase protein 1 (287 aa).

The first 28 residues, Met1–Gly28, serve as a signal peptide directing secretion. The region spanning Gly29–Tyr219 is the GH16 domain. Residue Glu105 is the Nucleophile of the active site. Glu109 functions as the Proton donor in the catalytic mechanism. Xyloglucan is bound at residue Glu109. Asn113 carries N-linked (GlcNAc...) asparagine glycosylation. Residues His122–Asn124, Asn132–Glu134, Asp198–Trp199, and Gly203 contribute to the xyloglucan site. Cystine bridges form between Cys227/Cys231 and Cys266/Cys280. Arg271 is a xyloglucan binding site.

It belongs to the glycosyl hydrolase 16 family. XTH group 2 subfamily. Post-translationally, contains at least one intrachain disulfide bond essential for its enzymatic activity. Expressed in fruit pulp. Expressed in leaves, flowers, calyces, stems and fruits. Highest expression in leaves and lowest in fruits.

The protein resides in the secreted. It localises to the cell wall. The protein localises to the extracellular space. It is found in the apoplast. It catalyses the reaction breaks a beta-(1-&gt;4) bond in the backbone of a xyloglucan and transfers the xyloglucanyl segment on to O-4 of the non-reducing terminal glucose residue of an acceptor, which can be a xyloglucan or an oligosaccharide of xyloglucan.. Its function is as follows. Catalyzes xyloglucan endotransglycosylation (XET). Cleaves and religates xyloglucan polymers. Does not catalyze xyloglucan endohydrolysis (XEH). Overexpression in Arabidopsis transgenic plants results in elevated tolerance to abiotic stress, such as salt, ABA (abscisic acid) and drought stresses, and in the production of wider leaves. Overexpression in transgenic tomato plants slows down fruit ripening and softening, and the plants produce larger fruits. Both transgenic plants have larger and more irregular cells. Moreover, the fruits of the transgenic tomato have higher density of cell wall and intercellular spaces. May provide cells with more strength and thickness to maintain structural integrity. Probably involved in cell wall assembly and synthesis in fast growing tissues and in the maintenance of firmness in mature fruits. In Diospyros kaki (Kaki persimmon), this protein is Xyloglucan endotransglucosylase protein 1.